The chain runs to 221 residues: Telomere repeats-binding bouquet formation protein 2 (221 aa).

The protein belongs to the TERB2 family. In terms of assembly, component of the MAJIN-TERB1-TERB2 complex, composed of MAJIN, TERB1 and TERB2.

The protein resides in the chromosome. Its subcellular location is the telomere. It localises to the nucleus inner membrane. Functionally, meiosis-specific telomere-associated protein involved in meiotic telomere attachment to the nucleus inner membrane, a crucial step for homologous pairing and synapsis. Component of the MAJIN-TERB1-TERB2 complex, which promotes telomere cap exchange by mediating attachment of telomeric DNA to the inner nuclear membrane and replacement of the protective cap of telomeric chromosomes: in early meiosis, the MAJIN-TERB1-TERB2 complex associates with telomeric DNA and the shelterin/telosome complex. During prophase, the complex matures and promotes release of the shelterin/telosome complex from telomeric DNA. This chain is Telomere repeats-binding bouquet formation protein 2, found in Bos taurus (Bovine).